The chain runs to 351 residues: Phosphate acyltransferase (351 aa).

The protein belongs to the PlsX family. Homodimer. Probably interacts with PlsY.

Its subcellular location is the cytoplasm. The enzyme catalyses a fatty acyl-[ACP] + phosphate = an acyl phosphate + holo-[ACP]. It participates in lipid metabolism; phospholipid metabolism. Functionally, catalyzes the reversible formation of acyl-phosphate (acyl-PO(4)) from acyl-[acyl-carrier-protein] (acyl-ACP). This enzyme utilizes acyl-ACP as fatty acyl donor, but not acyl-CoA. This Neisseria meningitidis serogroup B (strain ATCC BAA-335 / MC58) protein is Phosphate acyltransferase.